The primary structure comprises 341 residues: tRNA N6-adenosine threonylcarbamoyltransferase (341 aa).

Fe cation contacts are provided by H115 and H119. Residues 137–141, D170, G183, D187, and N276 contribute to the substrate site; that span reads AVSGG. Residue D306 coordinates Fe cation.

This sequence belongs to the KAE1 / TsaD family. Fe(2+) serves as cofactor.

The protein localises to the cytoplasm. It carries out the reaction L-threonylcarbamoyladenylate + adenosine(37) in tRNA = N(6)-L-threonylcarbamoyladenosine(37) in tRNA + AMP + H(+). Functionally, required for the formation of a threonylcarbamoyl group on adenosine at position 37 (t(6)A37) in tRNAs that read codons beginning with adenine. Is involved in the transfer of the threonylcarbamoyl moiety of threonylcarbamoyl-AMP (TC-AMP) to the N6 group of A37, together with TsaE and TsaB. TsaD likely plays a direct catalytic role in this reaction. This chain is tRNA N6-adenosine threonylcarbamoyltransferase, found in Lacticaseibacillus casei (strain BL23) (Lactobacillus casei).